A 362-amino-acid polypeptide reads, in one-letter code: Peptide chain release factor 1 (362 aa).

N5-methylglutamine is present on Q235.

Belongs to the prokaryotic/mitochondrial release factor family. In terms of processing, methylated by PrmC. Methylation increases the termination efficiency of RF1.

The protein resides in the cytoplasm. In terms of biological role, peptide chain release factor 1 directs the termination of translation in response to the peptide chain termination codons UAG and UAA. The polypeptide is Peptide chain release factor 1 (Buchnera aphidicola subsp. Baizongia pistaciae (strain Bp)).